A 653-amino-acid chain; its full sequence is MDPSKQGTLNRVENSVYRTAFKLRSVQTLCQLDLMDSFLIQQVLWRGRSGESTETSISVQQLFQELRELFQRTGMGNAAQVHPRAPELTLSLLMAMFDRTGSGILKRQPVAAALVALSGDSPLTKYRAFFQLYAEKNRRGDDSQARMTRRVLRALLTDLQQIPTVVGESYTLRPVESAIHSCFRGVLSSGIKEEKFLSWAQSEPLVLLWLPTCYRLSAAETVTHPVRCSVCRTFPIIGLRYHCLKCLDFDICELCFLSGLHKNSHEKSHTVMEECVQMSATENTKLLFRSLRNNLPQKRQRVGAVGRQWLLDQLASRDSASHGPARLCLQYKCPKAPGYASSRRAVETAATGVLCQRPSPALQGNHNRHGQTIVNIKNELWRTRDSLNTLLRERRLLRKQLHRYKQKLQGTYALQEEQNCRFETKIRELTTNQDNLWTKLQQMRRDLQAMLQPLHPSSSPQTTASKIFHSLPDDGIRRGGDSSHIKRVTRDGPEWELLPNSAKVDRKHKCQASSGKALPDSEPQEIILQSTRKQNHPQKMLSKVHSSPSAHQQDTLQIPPTEVKIPAQTLSAGKEMESCSEKRNNLEDEELQALLPRLLDAFDLDSPTGLQPLMDMELYGRAQQVCRAFSVLVDQITLPTWSEEESRLKGPLV.

Residues 223 to 279 form a ZZ-type zinc finger; sequence THPVRCSVCRTFPIIGLRYHCLKCLDFDICELCFLSGLHKNSHEKSHTVMEECVQMS. Cys-228, Cys-231, Cys-243, Cys-246, Cys-252, Cys-255, His-265, and His-269 together coordinate Zn(2+). Residues 384-411 adopt a coiled-coil conformation; sequence RDSLNTLLRERRLLRKQLHRYKQKLQGT.

In terms of tissue distribution, strongly expressed in the nervous and muscular tissues.

The protein localises to the cell membrane. In Mus musculus (Mouse), this protein is Dystrotelin (Dytn).